Consider the following 408-residue polypeptide: Glyceraldehyde-3-phosphate dehydrogenase, testis-specific (408 aa).

Residues Met1–Ala73 form a testis-specific N-terminal extension region. The tract at residues Gln19–Lys68 is disordered. Positions Pro53–Lys68 are enriched in pro residues. NAD(+)-binding positions include Arg85 to Ile86, Asp106, Lys151, Tyr173, and Ser193. Residues Ser223–Thr225, Thr254, Thr283–Gly284, and Arg306 contribute to the D-glyceraldehyde 3-phosphate site. Cys224 (nucleophile) is an active-site residue. NAD(+) is bound at residue Asn388.

It belongs to the glyceraldehyde-3-phosphate dehydrogenase family. Homotetramer. Interacts with ARRB2; the interaction is detected in the nucleus upon OR1D2 stimulation. Testis specific.

It localises to the cytoplasm. It catalyses the reaction D-glyceraldehyde 3-phosphate + phosphate + NAD(+) = (2R)-3-phospho-glyceroyl phosphate + NADH + H(+). The protein operates within carbohydrate degradation; glycolysis; pyruvate from D-glyceraldehyde 3-phosphate: step 1/5. Its function is as follows. May play an important role in regulating the switch between different pathways for energy production during spermiogenesis and in the spermatozoon. Required for sperm motility and male fertility. The protein is Glyceraldehyde-3-phosphate dehydrogenase, testis-specific (GAPDHS) of Homo sapiens (Human).